Consider the following 723-residue polypeptide: Catalase-peroxidase (723 aa).

Positions 89 to 212 (WHSAGTYRTG…LAAVQMGLIY (124 aa)) form a cross-link, tryptophyl-tyrosyl-methioninium (Trp-Tyr) (with M-238). The Proton acceptor role is filled by His-90. Residues 212–238 (YVNPEGPNGDPDPFAAAVDIRETFARM) constitute a cross-link (tryptophyl-tyrosyl-methioninium (Tyr-Met) (with W-89)). Heme b is bound at residue His-253.

Belongs to the peroxidase family. Peroxidase/catalase subfamily. Homodimer or homotetramer. Heme b serves as cofactor. In terms of processing, formation of the three residue Trp-Tyr-Met cross-link is important for the catalase, but not the peroxidase activity of the enzyme.

The catalysed reaction is H2O2 + AH2 = A + 2 H2O. It carries out the reaction 2 H2O2 = O2 + 2 H2O. Functionally, bifunctional enzyme with both catalase and broad-spectrum peroxidase activity. In Shewanella baltica (strain OS185), this protein is Catalase-peroxidase.